We begin with the raw amino-acid sequence, 691 residues long: DNA topoisomerase 1 (691 aa).

Residues 3–114 form the Toprim domain; sequence DYLVIVESPA…DCRVVFNEIT (112 aa). Glu9 and Asp82 together coordinate Mg(2+). The Topo IA-type catalytic domain occupies 129-558; the sequence is NMDLVDAQQA…NFYTDFEKRV (430 aa). The interaction with DNA stretch occupies residues 163 to 168; the sequence is SAGRVQ. The O-(5'-phospho-DNA)-tyrosine intermediate role is filled by Tyr298. C4-type zinc fingers lie at residues 579–605, 619–647, and 660–683; these read CELC…FPDC, CPSC…YPDC, and CPKC…CVEC.

Belongs to the type IA topoisomerase family. Monomer. Interacts with the RNA polymerase core. Mg(2+) serves as cofactor.

It catalyses the reaction ATP-independent breakage of single-stranded DNA, followed by passage and rejoining.. Functionally, releases the supercoiling and torsional tension of DNA, which is introduced during the DNA replication and transcription, by transiently cleaving and rejoining one strand of the DNA duplex. Introduces a single-strand break via transesterification at a target site in duplex DNA. The scissile phosphodiester is attacked by the catalytic tyrosine of the enzyme, resulting in the formation of a DNA-(5'-phosphotyrosyl)-enzyme intermediate and the expulsion of a 3'-OH DNA strand. The free DNA strand then undergoes passage around the unbroken strand, thus removing DNA supercoils. Finally, in the religation step, the DNA 3'-OH attacks the covalent intermediate to expel the active-site tyrosine and restore the DNA phosphodiester backbone. This chain is DNA topoisomerase 1, found in Bacillus subtilis (strain 168).